A 131-amino-acid chain; its full sequence is uncharacterized protein (131 aa).

Residues 101-131 form a disordered region; the sequence is SWWPPSGVVRGGPSSWPPSGVAEPREALGLP.

This is an uncharacterized protein from Homo sapiens (Human).